The sequence spans 134 residues: L-ectoine synthase (134 aa).

The protein belongs to the ectoine synthase family.

It carries out the reaction (2S)-4-acetamido-2-aminobutanoate = L-ectoine + H2O. Its pathway is amine and polyamine biosynthesis; ectoine biosynthesis; L-ectoine from L-aspartate 4-semialdehyde: step 3/3. Its function is as follows. Catalyzes the circularization of gamma-N-acetyl-alpha,gamma-diaminobutyric acid (ADABA) to ectoine (1,4,5,6-tetrahydro-2-methyl-4-pyrimidine carboxylic acid), which is an excellent osmoprotectant. The protein is L-ectoine synthase of Thermobifida fusca (strain YX).